Consider the following 165-residue polypeptide: MAKGGNKKATAAARAAANRLLADNRLARHQYEILDTLETGIELVGTEVKSIRAGQANLRDGFCLIRKGELQLHNVHISPHSHAGSYFNHDPLRTRKLLAHRREIDKLRGQLDRKGLTLIPLNLHLKGSWIKLTIGLGKGRKLHDKRQEEKRKQADREVKSALARY.

The disordered stretch occupies residues 141-165; the sequence is KLHDKRQEEKRKQADREVKSALARY. A compositionally biased stretch (basic and acidic residues) spans 145 to 159; it reads KRQEEKRKQADREVK.

This sequence belongs to the SmpB family.

The protein resides in the cytoplasm. In terms of biological role, required for rescue of stalled ribosomes mediated by trans-translation. Binds to transfer-messenger RNA (tmRNA), required for stable association of tmRNA with ribosomes. tmRNA and SmpB together mimic tRNA shape, replacing the anticodon stem-loop with SmpB. tmRNA is encoded by the ssrA gene; the 2 termini fold to resemble tRNA(Ala) and it encodes a 'tag peptide', a short internal open reading frame. During trans-translation Ala-aminoacylated tmRNA acts like a tRNA, entering the A-site of stalled ribosomes, displacing the stalled mRNA. The ribosome then switches to translate the ORF on the tmRNA; the nascent peptide is terminated with the 'tag peptide' encoded by the tmRNA and targeted for degradation. The ribosome is freed to recommence translation, which seems to be the essential function of trans-translation. This Prochlorococcus marinus (strain MIT 9303) protein is SsrA-binding protein.